The primary structure comprises 316 residues: ATP synthase gamma chain (316 aa).

This sequence belongs to the ATPase gamma chain family. As to quaternary structure, F-type ATPases have 2 components, CF(1) - the catalytic core - and CF(0) - the membrane proton channel. CF(1) has five subunits: alpha(3), beta(3), gamma(1), delta(1), epsilon(1). CF(0) has three main subunits: a, b and c.

It localises to the cellular thylakoid membrane. Functionally, produces ATP from ADP in the presence of a proton gradient across the membrane. The gamma chain is believed to be important in regulating ATPase activity and the flow of protons through the CF(0) complex. This chain is ATP synthase gamma chain, found in Synechococcus sp. (strain CC9605).